The primary structure comprises 126 residues: uncharacterized protein (126 aa).

The disordered stretch occupies residues 1-101 (MQASSEPANV…KSVGSQSADE (101 aa)). Composition is skewed to polar residues over residues 14-27 (GQNQ…STSP) and 86-99 (DTEA…SQSA).

This is an uncharacterized protein from Schizosaccharomyces pombe (strain 972 / ATCC 24843) (Fission yeast).